The chain runs to 592 residues: Aspartate--tRNA(Asp/Asn) ligase (592 aa).

E176 serves as a coordination point for L-aspartate. Residues 200–203 (QIFK) form an aspartate region. Residue R222 coordinates L-aspartate. ATP contacts are provided by residues 222 to 224 (RDE) and Q231. H450 is a binding site for L-aspartate. E484 is a binding site for ATP. R491 serves as a coordination point for L-aspartate. 536–539 (GLDR) contributes to the ATP binding site.

This sequence belongs to the class-II aminoacyl-tRNA synthetase family. Type 1 subfamily. Homodimer.

The protein localises to the cytoplasm. The catalysed reaction is tRNA(Asx) + L-aspartate + ATP = L-aspartyl-tRNA(Asx) + AMP + diphosphate. In terms of biological role, aspartyl-tRNA synthetase with relaxed tRNA specificity since it is able to aspartylate not only its cognate tRNA(Asp) but also tRNA(Asn). Reaction proceeds in two steps: L-aspartate is first activated by ATP to form Asp-AMP and then transferred to the acceptor end of tRNA(Asp/Asn). The sequence is that of Aspartate--tRNA(Asp/Asn) ligase from Anoxybacillus flavithermus (strain DSM 21510 / WK1).